Here is a 130-residue protein sequence, read N- to C-terminus: Small ribosomal subunit protein uS8 (130 aa).

It belongs to the universal ribosomal protein uS8 family. Part of the 30S ribosomal subunit. Contacts proteins S5 and S12.

Its function is as follows. One of the primary rRNA binding proteins, it binds directly to 16S rRNA central domain where it helps coordinate assembly of the platform of the 30S subunit. The sequence is that of Small ribosomal subunit protein uS8 from Pseudomonas fluorescens (strain Pf0-1).